Here is a 94-residue protein sequence, read N- to C-terminus: Large ribosomal subunit protein uL23 (94 aa).

It belongs to the universal ribosomal protein uL23 family. As to quaternary structure, part of the 50S ribosomal subunit. Contacts protein L29, and trigger factor when it is bound to the ribosome.

Its function is as follows. One of the early assembly proteins it binds 23S rRNA. One of the proteins that surrounds the polypeptide exit tunnel on the outside of the ribosome. Forms the main docking site for trigger factor binding to the ribosome. The polypeptide is Large ribosomal subunit protein uL23 (Geobacter sulfurreducens (strain ATCC 51573 / DSM 12127 / PCA)).